A 163-amino-acid polypeptide reads, in one-letter code: Deoxyuridine 5'-triphosphate nucleotidohydrolase (163 aa).

Substrate contacts are provided by residues 78–80 (RSG), Asn91, and 95–97 (TVD). Residues 140-151 (ERESLNETERGD) are compositionally biased toward basic and acidic residues. The interval 140–163 (ERESLNETERGDGGFGHTGVNSQP) is disordered.

The protein belongs to the dUTPase family. Mg(2+) serves as cofactor.

It carries out the reaction dUTP + H2O = dUMP + diphosphate + H(+). It functions in the pathway pyrimidine metabolism; dUMP biosynthesis; dUMP from dCTP (dUTP route): step 2/2. In terms of biological role, this enzyme is involved in nucleotide metabolism: it produces dUMP, the immediate precursor of thymidine nucleotides and it decreases the intracellular concentration of dUTP so that uracil cannot be incorporated into DNA. The sequence is that of Deoxyuridine 5'-triphosphate nucleotidohydrolase from Heliobacterium modesticaldum (strain ATCC 51547 / Ice1).